Here is a 337-residue protein sequence, read N- to C-terminus: Protein-arginine kinase (337 aa).

The Phosphagen kinase C-terminal domain maps to 12-240 (IVIASKVKIL…NKLILREKNQ (229 aa)). ATP-binding positions include 15 to 19 (ASKVK), 162 to 166 (RAKVF), and 193 to 198 (KSIYNS).

It belongs to the ATP:guanido phosphotransferase family.

The catalysed reaction is L-arginyl-[protein] + ATP = N(omega)-phospho-L-arginyl-[protein] + ADP + H(+). Catalyzes the specific phosphorylation of arginine residues in proteins. The sequence is that of Protein-arginine kinase from Clostridium perfringens (strain ATCC 13124 / DSM 756 / JCM 1290 / NCIMB 6125 / NCTC 8237 / Type A).